We begin with the raw amino-acid sequence, 279 residues long: Probable endonuclease 4 (279 aa).

Residues His-69, His-109, Glu-145, Asp-179, His-182, His-216, Asp-229, His-231, and Glu-261 each contribute to the Zn(2+) site.

Belongs to the AP endonuclease 2 family. Zn(2+) serves as cofactor.

It catalyses the reaction Endonucleolytic cleavage to 5'-phosphooligonucleotide end-products.. Functionally, endonuclease IV plays a role in DNA repair. It cleaves phosphodiester bonds at apurinic or apyrimidinic (AP) sites, generating a 3'-hydroxyl group and a 5'-terminal sugar phosphate. This chain is Probable endonuclease 4, found in Chlorobium phaeovibrioides (strain DSM 265 / 1930) (Prosthecochloris vibrioformis (strain DSM 265)).